Consider the following 245-residue polypeptide: Membrane-associated progesterone-binding protein 4 (245 aa).

The helical transmembrane segment at 6–26 (RFLLSPFVGVTFIVVLVSLYF) threads the bilayer. The Cytochrome b5 heme-binding domain occupies 39–138 (KRLFSAEELA…RTYTPVGKLV (100 aa)). The tract at residues 45–138 (EELALYNGTD…RTYTPVGKLV (94 aa)) is steroid-binding.

This sequence belongs to the cytochrome b5 family. MAPR subfamily.

It localises to the membrane. The polypeptide is Membrane-associated progesterone-binding protein 4 (Arabidopsis thaliana (Mouse-ear cress)).